The chain runs to 236 residues: Rab-like protein 3 (236 aa).

The tract at residues 1–236 is small GTPase-like; it reads MASLDRVKVL…GGTLKSLHYD (236 aa). GTP contacts are provided by residues 16–21, 148–150, and 179–180; these read GVGKSS, KLD, and DC.

Belongs to the small GTPase superfamily. Rab family. As to quaternary structure, homodimer. Interacts with GPR89; the interaction stabilizes GPR89. Interacts with RAP1GDS1.

Required for KRAS signaling regulation and modulation of cell proliferation. Regulator of KRAS prenylation, and probably prenylation of other small GTPases. Required for lymphocyte development and function. Not required for myeloid cell development. The sequence is that of Rab-like protein 3 (RABL3) from Bos taurus (Bovine).